Consider the following 677-residue polypeptide: uncharacterized protein (677 aa).

3 consecutive transmembrane segments (helical) span residues I80–F102, A338–F360, and L367–L386. Positions D523 to R556 are disordered. A compositionally biased stretch (acidic residues) spans S533–S546.

The protein resides in the cell membrane. This is an uncharacterized protein from Treponema pallidum (strain Nichols).